A 271-amino-acid polypeptide reads, in one-letter code: Phosphonoacetaldehyde hydrolase (271 aa).

The active-site Nucleophile is the Asp-12. Mg(2+) is bound by residues Asp-12 and Ala-14. The Schiff-base intermediate with substrate role is filled by Lys-54. Asp-188 contacts Mg(2+).

Belongs to the HAD-like hydrolase superfamily. PhnX family. In terms of assembly, homodimer. Requires Mg(2+) as cofactor.

It catalyses the reaction phosphonoacetaldehyde + H2O = acetaldehyde + phosphate + H(+). Functionally, involved in phosphonate degradation. The polypeptide is Phosphonoacetaldehyde hydrolase (Vibrio vulnificus (strain CMCP6)).